Reading from the N-terminus, the 369-residue chain is Aminomethyltransferase (369 aa).

Belongs to the GcvT family. In terms of assembly, the glycine cleavage system is composed of four proteins: P, T, L and H.

The catalysed reaction is N(6)-[(R)-S(8)-aminomethyldihydrolipoyl]-L-lysyl-[protein] + (6S)-5,6,7,8-tetrahydrofolate = N(6)-[(R)-dihydrolipoyl]-L-lysyl-[protein] + (6R)-5,10-methylene-5,6,7,8-tetrahydrofolate + NH4(+). In terms of biological role, the glycine cleavage system catalyzes the degradation of glycine. The sequence is that of Aminomethyltransferase from Rippkaea orientalis (strain PCC 8801 / RF-1) (Cyanothece sp. (strain PCC 8801)).